A 345-amino-acid chain; its full sequence is Heat-inducible transcription repressor HrcA (345 aa).

The protein belongs to the HrcA family.

Its function is as follows. Negative regulator of class I heat shock genes (grpE-dnaK-dnaJ and groELS operons). Prevents heat-shock induction of these operons. The protein is Heat-inducible transcription repressor HrcA of Tetragenococcus halophilus (Pediococcus halophilus).